We begin with the raw amino-acid sequence, 856 residues long: Envelope glycoprotein gp160 (856 aa).

The signal sequence occupies residues 1–31 (MKVKGIQGNWQNWWKWGTLILGLVIICSAAE). Residues 32-684 (NLWVTVYYGV…ISNWLWYIKI (653 aa)) are Extracellular-facing. A disulfide bridge links cysteine 53 with cysteine 73. Residues asparagine 87, asparagine 132, asparagine 138, asparagine 152, asparagine 156, asparagine 183, and asparagine 198 are each glycosylated (N-linked (GlcNAc...) asparagine; by host). 5 disulfide bridges follow: cysteine 118-cysteine 206, cysteine 125-cysteine 197, cysteine 130-cysteine 153, cysteine 219-cysteine 248, and cysteine 229-cysteine 240. Residues 130 to 152 (CHNITIKDNNTNVDTEMKEEIKN) form a V1 region. The segment at 153-197 (CSYNMTTELRDKQRKIYSLFYRLDIVPIGGNSSNGDSSKYRLINC) is V2. Asparagine 242, asparagine 263, asparagine 277, asparagine 294, asparagine 302, asparagine 332, asparagine 339, asparagine 355, and asparagine 364 each carry an N-linked (GlcNAc...) asparagine; by host glycan. The V3 stretch occupies residues 297–330 (CMRPNNNTRKSISIGPGRAFFATGDIIGDIRQAH). Cysteine 297 and cysteine 331 form a disulfide bridge. Residues 365-375 (SSGGDVEITTH) form a CD4-binding loop region. 2 disulfides stabilise this stretch: cysteine 379–cysteine 445 and cysteine 386–cysteine 418. A V4 region spans residues 386 to 418 (CNTSGLFNGTWLNGTSNNTWKIDTVNDTIILPC). N-linked (GlcNAc...) asparagine; by host glycosylation is found at asparagine 387, asparagine 393, asparagine 398, asparagine 402, asparagine 411, asparagine 448, asparagine 461, asparagine 462, and asparagine 465. V5 regions lie at residues 461–471 (NNTSNETFRPG) and 463–471 (TSNETFRPG). The tract at residues 512–532 (AIGMGAFFLGFLGAAGSTMGA) is fusion peptide. The immunosuppression stretch occupies residues 574 to 592 (KQLQARILAVERYLKDQQL). Residues cysteine 598 and cysteine 604 are joined by a disulfide bond. Asparagine 611, asparagine 616, and asparagine 637 each carry an N-linked (GlcNAc...) asparagine; by host glycan. The stretch at 633–667 (KEVSNYTQVIYNLIEESQTQQEINERDLLALDKWA) forms a coiled coil. Positions 662–683 (ALDKWANLWNWFDISNWLWYIK) are MPER; binding to GalCer. Residues 685 to 705 (FIMIVGGLIGLRIVFAVLSII) form a helical membrane-spanning segment. Over 706–856 (NRVRQGYSPL…IRQGLERALL (151 aa)) the chain is Cytoplasmic. Residues 712–715 (YSPL) carry the YXXL motif; contains endocytosis signal motif. Residues 720-742 (LTHHQREPDRPERIEEGGGEQDR) form a disordered region. The span at 723 to 742 (HQREPDRPERIEEGGGEQDR) shows a compositional bias: basic and acidic residues. A lipid anchor (S-palmitoyl cysteine; by host) is attached at cysteine 764. Positions 855-856 (LL) match the Di-leucine internalization motif motif.

The protein belongs to the HIV-1 env protein family. The mature envelope protein (Env) consists of a homotrimer of non-covalently associated gp120-gp41 heterodimers. The resulting complex protrudes from the virus surface as a spike. There seems to be as few as 10 spikes on the average virion. Interacts with host CD4, CCR5 and CXCR4. Gp120 also interacts with the C-type lectins CD209/DC-SIGN and CLEC4M/DC-SIGNR (collectively referred to as DC-SIGN(R)). Gp120 and gp41 interact with GalCer. Gp120 interacts with host ITGA4/ITGB7 complex; on CD4+ T-cells, this interaction results in rapid activation of integrin ITGAL/LFA-1, which facilitates efficient cell-to-cell spreading of HIV-1. Gp120 interacts with cell-associated heparan sulfate; this interaction increases virus infectivity on permissive cells and may be involved in infection of CD4- cells. As to quaternary structure, the mature envelope protein (Env) consists of a homotrimer of non-covalently associated gp120-gp41 heterodimers. The resulting complex protrudes from the virus surface as a spike. There seems to be as few as 10 spikes on the average virion. Post-translationally, highly glycosylated by host. The high number of glycan on the protein is reffered to as 'glycan shield' because it contributes to hide protein sequence from adaptive immune system. In terms of processing, palmitoylation of the transmembrane protein and of Env polyprotein (prior to its proteolytic cleavage) is essential for their association with host cell membrane lipid rafts. Palmitoylation is therefore required for envelope trafficking to classical lipid rafts, but not for viral replication. Specific enzymatic cleavages in vivo yield mature proteins. Envelope glycoproteins are synthesized as an inactive precursor that is heavily N-glycosylated and processed likely by host cell furin in the Golgi to yield the mature SU and TM proteins. The cleavage site between SU and TM requires the minimal sequence [KR]-X-[KR]-R. About 2 of the 9 disulfide bonds of gp41 are reduced by P4HB/PDI, following binding to CD4 receptor.

Its subcellular location is the virion membrane. It localises to the host cell membrane. The protein resides in the host endosome membrane. In terms of biological role, oligomerizes in the host endoplasmic reticulum into predominantly trimers. In a second time, gp160 transits in the host Golgi, where glycosylation is completed. The precursor is then proteolytically cleaved in the trans-Golgi and thereby activated by cellular furin or furin-like proteases to produce gp120 and gp41. Attaches the virus to the host lymphoid cell by binding to the primary receptor CD4. This interaction induces a structural rearrangement creating a high affinity binding site for a chemokine coreceptor like CXCR4 and/or CCR5. Acts as a ligand for CD209/DC-SIGN and CLEC4M/DC-SIGNR, which are respectively found on dendritic cells (DCs), and on endothelial cells of liver sinusoids and lymph node sinuses. These interactions allow capture of viral particles at mucosal surfaces by these cells and subsequent transmission to permissive cells. HIV subverts the migration properties of dendritic cells to gain access to CD4+ T-cells in lymph nodes. Virus transmission to permissive T-cells occurs either in trans (without DCs infection, through viral capture and transmission), or in cis (following DCs productive infection, through the usual CD4-gp120 interaction), thereby inducing a robust infection. In trans infection, bound virions remain infectious over days and it is proposed that they are not degraded, but protected in non-lysosomal acidic organelles within the DCs close to the cell membrane thus contributing to the viral infectious potential during DCs' migration from the periphery to the lymphoid tissues. On arrival at lymphoid tissues, intact virions recycle back to DCs' cell surface allowing virus transmission to CD4+ T-cells. Its function is as follows. Acts as a class I viral fusion protein. Under the current model, the protein has at least 3 conformational states: pre-fusion native state, pre-hairpin intermediate state, and post-fusion hairpin state. During fusion of viral and target intracellular membranes, the coiled coil regions (heptad repeats) assume a trimer-of-hairpins structure, positioning the fusion peptide in close proximity to the C-terminal region of the ectodomain. The formation of this structure appears to drive apposition and subsequent fusion of viral and target cell membranes. Complete fusion occurs in host cell endosomes and is dynamin-dependent, however some lipid transfer might occur at the plasma membrane. The virus undergoes clathrin-dependent internalization long before endosomal fusion, thus minimizing the surface exposure of conserved viral epitopes during fusion and reducing the efficacy of inhibitors targeting these epitopes. Membranes fusion leads to delivery of the nucleocapsid into the cytoplasm. This Homo sapiens (Human) protein is Envelope glycoprotein gp160.